The chain runs to 141 residues: VLSPADKTNVKAAWAKVGNHAADFGAEALERMFMSFPSTKTYFSHFDLGHNSTQVKGHGKKVADALTKAVGHLDTLPDALSDLSDLHAHKLRVDPVNFKLLSHCLLVTLAAHLPGDFTPSVHASLDKFLASVSTVLTSKYR.

A Globin domain is found at valine 1–arginine 141. Serine 3 is modified (phosphoserine). Lysine 7 carries the N6-succinyllysine modification. Threonine 8 carries the phosphothreonine modification. Lysine 11 carries the post-translational modification N6-succinyllysine. Lysine 16 is modified (N6-acetyllysine; alternate). Residue lysine 16 is modified to N6-succinyllysine; alternate. Serine 35 carries the post-translational modification Phosphoserine. N6-succinyllysine is present on lysine 40. O2 is bound at residue histidine 58. Histidine 87 lines the heme b pocket. Residue serine 102 is modified to Phosphoserine. Threonine 108 is modified (phosphothreonine). Residues serine 124 and serine 131 each carry the phosphoserine modification. A phosphothreonine mark is found at threonine 134 and threonine 137. Serine 138 is subject to Phosphoserine.

This sequence belongs to the globin family. As to quaternary structure, heterotetramer of two alpha chains and two beta chains. Red blood cells.

Its function is as follows. Involved in oxygen transport from the lung to the various peripheral tissues. Functionally, hemopressin acts as an antagonist peptide of the cannabinoid receptor CNR1. Hemopressin-binding efficiently blocks cannabinoid receptor CNR1 and subsequent signaling. The sequence is that of Hemoglobin subunit alpha (HBA) from Physeter macrocephalus (Sperm whale).